Here is a 190-residue protein sequence, read N- to C-terminus: Large ribosomal subunit protein uL6 (190 aa).

It belongs to the universal ribosomal protein uL6 family.

The protein is Large ribosomal subunit protein uL6 (RpL9) of Drosophila melanogaster (Fruit fly).